Reading from the N-terminus, the 299-residue chain is Sulfate adenylyltransferase subunit 2 (299 aa).

It belongs to the PAPS reductase family. CysD subfamily. Heterodimer composed of CysD, the smaller subunit, and CysN.

The catalysed reaction is sulfate + ATP + H(+) = adenosine 5'-phosphosulfate + diphosphate. It functions in the pathway sulfur metabolism; hydrogen sulfide biosynthesis; sulfite from sulfate: step 1/3. With CysN forms the ATP sulfurylase (ATPS) that catalyzes the adenylation of sulfate producing adenosine 5'-phosphosulfate (APS) and diphosphate, the first enzymatic step in sulfur assimilation pathway. APS synthesis involves the formation of a high-energy phosphoric-sulfuric acid anhydride bond driven by GTP hydrolysis by CysN coupled to ATP hydrolysis by CysD. The protein is Sulfate adenylyltransferase subunit 2 of Colwellia psychrerythraea (strain 34H / ATCC BAA-681) (Vibrio psychroerythus).